The primary structure comprises 142 residues: Negative cofactor 2 complex subunit alpha (142 aa).

Residues Met-1–Leu-11 are compositionally biased toward polar residues. Positions Met-1–Gly-43 are disordered. Phosphoserine is present on Ser-27. Residues Val-29–Pro-137 form the Histone-fold domain. Phosphoserine is present on Ser-141.

This sequence belongs to the NC2 alpha/DRAP1 family. As to quaternary structure, component of the NC2 (negative cofactor 2) complex composed of BUR6 and NCB2. The NC2 complex associates with SPT15/TBP. Interacts with SPT15/TBP.

It is found in the nucleus. Functionally, component of the NC2 complex which represses RNA polymerase II transcription through binding to SPT15/TBP and thereby inhibiting the assembly of the preinitiation complex. The NC2 complex may also mediate transcriptional activation from TATA-driven promoters through association with SPT15/TBP. The sequence is that of Negative cofactor 2 complex subunit alpha (BUR6) from Saccharomyces cerevisiae (strain ATCC 204508 / S288c) (Baker's yeast).